The chain runs to 281 residues: Leukocyte antigen CD37 (281 aa).

The Cytoplasmic portion of the chain corresponds to 1–17; the sequence is MSAQESCLSLIKYFLFV. Residues 18–38 form a helical membrane-spanning segment; that stretch reads FNLFFFVLGGLIFCFGTWILI. Over 39 to 59 the chain is Extracellular; the sequence is DKTSFVSFVGLSFVPLQTWSK. A helical transmembrane segment spans residues 60–74; sequence VLSVSGVLTMALALL. Residues 75-85 are Cytoplasmic-facing; it reads GCVGALKELRC. Residues 86 to 111 form a helical membrane-spanning segment; the sequence is LLGLYFGMLLLLFATQITLGILISTQ. The Extracellular segment spans residues 112 to 241; the sequence is RVRLERRVQE…RSLQKWLHNN (130 aa). N-linked (GlcNAc...) asparagine glycosylation is found at asparagine 170, asparagine 183, and asparagine 188. Residues 242–266 traverse the membrane as a helical segment; it reads IISIVGICLGVGLLELGFMTLSIFL. Residues 267–281 are Cytoplasmic-facing; sequence CRNLDHVYDRLARYR.

Belongs to the tetraspanin (TM4SF) family. Interacts with SCIMP. Interacts with SOCS3. Interacts with DECTIN1/CLEC7A. Post-translationally, tyrosine phosphorylated; leading to activation of downstream signaling pathways. In terms of tissue distribution, B-lymphocytes.

The protein localises to the cell membrane. Structural component of specialized membrane microdomains known as tetraspanin-enriched microdomains (TERMs), which act as platforms for receptor clustering and signaling. Participates thereby in diverse biological functions such as cell signal transduction, adhesion, migration and protein trafficking. Upon ligand binding, two signaling pathways are activated, one acting through phosphorylation by LYN leading to cell death or a survival pathway with activation of GSK3B. Plays an essential role essential for clustering of integrin ITGA4/ITGB1 and promotes its mobility in the plasma membrane of B-cells. In turn, participates in ITGA4/ITGB1 integrin-mediated antiapoptotic signaling through AKT. Plays also a role in the migration of dendritic cells and neutrophils to draining lymph nodes, as well as in their integrin-mediated adhesion. Negatively regulates IL-6 responses through direct interaction with SOCS3 thereby preventing constitutive IL-6 signaling. Alternatively, inhibition of IL-6 signaling can also occur via interaction and stabilization of DECTIN1/CLEC7A at the cell membrane to inhibit its ability to promote the production of IL-6. The chain is Leukocyte antigen CD37 (Cd37) from Rattus norvegicus (Rat).